Reading from the N-terminus, the 707-residue chain is Complement C1r-A subcomponent (707 aa).

An N-terminal signal peptide occupies residues 1-16; it reads MWLFALLVTLFYGVEG. Residues 17–140 form the CUB 1 domain; the sequence is SIYLPQKLYG…KGFLAYYQAV (124 aa). Residues E65, D73, and D118 each coordinate Ca(2+). An intrachain disulfide couples C70 to C88. The N-linked (GlcNAc...) asparagine glycan is linked to N124. Ca(2+)-binding residues include D141, L142, and E144. The region spanning 141–189 is the EGF-like; calcium-binding domain; it reads DLDECASQPNSVEEGLQPRCQHLCHNYVGGYFCSCHPGYELQKDGQSCQ. 4 disulfides stabilise this stretch: C145–C164, C160–C173, C175–C188, and C192–C219. Ca(2+)-binding residues include N166, Y167, and G170. N166 is subject to (3R)-3-hydroxyasparagine. Residues 192–304 form the CUB 2 domain; it reads CSSELYTEPS…RGWKLHYTTE (113 aa). A Phosphoserine; by CK2 modification is found at S205. Residue N220 is glycosylated (N-linked (GlcNAc...) asparagine). 4 residues coordinate Ca(2+): D242, D252, D289, and D293. C249 and C267 form a disulfide bridge. Sushi domains follow at residues 306 to 372 and 373 to 448; these read IKCP…RCKI and KNCG…RCLP. 5 disulfides stabilise this stretch: C308-C357, C337-C370, C375-C428, C405-C446, and C450-C579. One can recognise a Peptidase S1 domain in the interval 463 to 704; the sequence is IIRGQPARPG…YVDWIKKEMG (242 aa). Residues H501 and D559 each act as charge relay system in the active site. N-linked (GlcNAc...) asparagine glycosylation is present at N583. Cystine bridges form between C622–C641 and C652–C682. The active-site Charge relay system is S656.

The protein belongs to the peptidase S1 family. In terms of assembly, core component of the complement C1 complex, a calcium-dependent complex composed of 1 molecule of the C1Q subcomplex, 2 molecules of C1R and 2 molecules of C1S. The C1Q subcomplex is composed 18 subunits: 3 chains of C1QA, C1QB, and C1QC trimerize to form 6 collagen-like triple helices connected to six globular ligand-recognition modules. Within the C1 complex, C1R is a dimer of identical chains, each of which is activated by cleavage into two chains, heavy and light, connected by disulfide bonds. In terms of processing, cleaved and activated by autocatalytic processing to generate Complement C1r subcomponent heavy and light chains that are connected by disulfide bonds. Post-translationally, the iron and 2-oxoglutarate dependent 3-hydroxylation of aspartate and asparagine is (R) stereospecific within EGF domains.

It localises to the secreted. The protein resides in the cell surface. The enzyme catalyses Selective cleavage of Lys(or Arg)-|-Ile bond in complement subcomponent C1s to form the active form of C1s (EC 3.4.21.42).. Activated by the C1Q subcomplex of the C1 complex following C1Q binding to immunoglobulins (IgG or IgM) complexed with antigens to form antigen-antibody complexes on the surface of pathogens. Immunoglobulin-binding promotes autoactivation of C1R, which results in the cleavage of the Arg-Ile bond in the catalytic domain. Serine protease component of the complement C1 complex, a multiprotein complex that initiates the classical pathway of the complement system, a cascade of proteins that leads to phagocytosis and breakdown of pathogens and signaling that strengthens the adaptive immune system. C1R catalyzes the first enzymatic step in the classical complement pathway: it is activated by the C1Q subcomplex of the C1 complex, which associates with IgG or IgM immunoglobulins complexed with antigens to form antigen-antibody complexes on the surface of pathogens. Immunoglobulin-binding promotes the autocatalytic cleavage and activation of C1R. Activated C1R then cleaves and activates C1S, the second protease of the classical complement pathway. It is unclear if C1R activates C1S within single, strained C1 complexes or between neighboring C1 complexes on surfaces. The sequence is that of Complement C1r-A subcomponent (C1ra) from Mus musculus (Mouse).